Consider the following 338-residue polypeptide: Glyceraldehyde-3-phosphate dehydrogenase (338 aa).

Residues Thr-11–Ile-12 and Gly-111 each bind NAD(+). Position 140–142 (Ser-140–Asn-142) interacts with D-glyceraldehyde 3-phosphate. Cys-141 functions as the Nucleophile in the catalytic mechanism. Arg-169 serves as a coordination point for NAD(+). His-195–Gly-196 is a D-glyceraldehyde 3-phosphate binding site. Position 302 (Gln-302) interacts with NAD(+).

Belongs to the glyceraldehyde-3-phosphate dehydrogenase family. In terms of assembly, homotetramer.

The protein localises to the cytoplasm. It catalyses the reaction D-glyceraldehyde 3-phosphate + phosphate + NADP(+) = (2R)-3-phospho-glyceroyl phosphate + NADPH + H(+). The catalysed reaction is D-glyceraldehyde 3-phosphate + phosphate + NAD(+) = (2R)-3-phospho-glyceroyl phosphate + NADH + H(+). It participates in carbohydrate degradation; glycolysis; pyruvate from D-glyceraldehyde 3-phosphate: step 1/5. This chain is Glyceraldehyde-3-phosphate dehydrogenase (gap), found in Methanobacterium formicicum.